The following is a 339-amino-acid chain: NADH-quinone oxidoreductase subunit H (339 aa).

The next 9 helical transmembrane spans lie at 9-29 (IFPLIIIALKVVAITIPLILC), 50-70 (PNVVGPFGLLQPIADAVKLLF), 82-102 (ILFILAPMITFILSLIGWAVI), 115-135 (VGVLYILAISSLSVYGIIIAG), 161-181 (MGLVIITVLLTTGTLNLSEII), 187-207 (IPWWIDLMLLPMGVVFFISVL), 235-255 (MGFALFFLGEYANMILVSAMT), 275-295 (IPGFFWFVFKVGFLLFCFLWI), and 311-331 (GWKVFLPLTLFWVVLVSSVLV).

It belongs to the complex I subunit 1 family. In terms of assembly, NDH-1 is composed of 14 different subunits. Subunits NuoA, H, J, K, L, M, N constitute the membrane sector of the complex.

It is found in the cell inner membrane. The catalysed reaction is a quinone + NADH + 5 H(+)(in) = a quinol + NAD(+) + 4 H(+)(out). Functionally, NDH-1 shuttles electrons from NADH, via FMN and iron-sulfur (Fe-S) centers, to quinones in the respiratory chain. The immediate electron acceptor for the enzyme in this species is believed to be ubiquinone. Couples the redox reaction to proton translocation (for every two electrons transferred, four hydrogen ions are translocated across the cytoplasmic membrane), and thus conserves the redox energy in a proton gradient. This subunit may bind ubiquinone. This Rickettsia rickettsii (strain Iowa) protein is NADH-quinone oxidoreductase subunit H.